Consider the following 431-residue polypeptide: D-tagatose-1,6-bisphosphate aldolase subunit KbaZ (431 aa).

It belongs to the GatZ/KbaZ family. KbaZ subfamily. In terms of assembly, forms a complex with KbaY.

It participates in carbohydrate metabolism; D-tagatose 6-phosphate degradation; D-glyceraldehyde 3-phosphate and glycerone phosphate from D-tagatose 6-phosphate: step 2/2. In terms of biological role, component of the tagatose-1,6-bisphosphate aldolase KbaYZ that is required for full activity and stability of the Y subunit. Could have a chaperone-like function for the proper and stable folding of KbaY. When expressed alone, KbaZ does not show any aldolase activity. This is D-tagatose-1,6-bisphosphate aldolase subunit KbaZ from Salmonella arizonae (strain ATCC BAA-731 / CDC346-86 / RSK2980).